The chain runs to 1516 residues: AP-4 complex accessory subunit RUSC2 (1516 aa).

6 disordered regions span residues 33–105 (AGGG…PFLL), 202–224 (LDECGGPGGSGSGGGASDTSGFS), 229–248 (WKLSSDESPRNPGCSGSGDQ), 331–351 (SKMSYESHHPESGGREGGYGC), 404–445 (LSSQ…PSEY), and 478–511 (GQVYTNTSPPNLSTGRQRSRSYDRSLQRSPPVRL). Polar residues predominate over residues 66-81 (LFSSLHSTPGGTARSI). Positions 82-92 (DSTKSRSRDGR) are enriched in basic and acidic residues. A compositionally biased stretch (gly residues) spans 206–217 (GGPGGSGSGGGA). A compositionally biased stretch (basic and acidic residues) spans 333-344 (MSYESHHPESGG). The segment covering 405–420 (SSQSSPSPAGSSITSC) has biased composition (low complexity). Positions 428-440 (SPPPGPGPDPGPS) are enriched in pro residues. Residues 480–493 (VYTNTSPPNLSTGR) show a composition bias toward polar residues. A phosphoserine mark is found at S536, S543, and S559. 4 disordered regions span residues 550–588 (GRKKTGGSGSPPLRVSVGDSSQEFSPIQEAQQDRGAPLD), 646–688 (LMDP…KEQR), 727–836 (RTQQ…PQKE), and 868–889 (ESLARGGGEGSMATRPSNANHL). Residues 567-579 (GDSSQEFSPIQEA) show a composition bias toward polar residues. S656 carries the phosphoserine modification. Residues 729-746 (QQPAPLAAPAAQVSVPAP) show a composition bias toward low complexity. S781 is subject to Phosphoserine. A compositionally biased stretch (low complexity) spans 791–801 (PSTDSSASTSC). The region spanning 1031–1175 (NVGHLVLKYL…LPFSLDLLFQ (145 aa)) is the RUN domain. Disordered stretches follow at residues 1210–1261 (RARG…GRAR), 1286–1408 (IEGS…LPSD), and 1422–1449 (QTVGSRREPEPKESLQEPHSPALPSSPP). Residues 1219 to 1230 (DVDRAAQGERVK) are compositionally biased toward basic and acidic residues. Residues 1237-1251 (GGEEEEEEEETEEVA) show a composition bias toward acidic residues. Residues 1355 to 1364 (ELRRSREREG) show a composition bias toward basic and acidic residues. A phosphoserine mark is found at S1368 and S1380. Basic and acidic residues predominate over residues 1426–1437 (SRREPEPKESLQ). The SH3 domain maps to 1447–1506 (SPPCEVQALCHHLATGPGQLSFHKGDILRVLGRAGGDWLRCSRGPDSGLVPLAYVTLTPT).

Associated component of the adapter-like complex 4 (AP-4). Interacts with active RAB1A and RAB1B, and with GOLGA2. Interacts (via RUN domain) with RAB35 (GTP-bound form); the interaction recruits RUSC2 to the plasma membrane. As to expression, widely expressed, with highest levels in brain and testis.

It localises to the cytoplasm. Its subcellular location is the cytosol. The protein localises to the cell membrane. In terms of biological role, associates with the adapter-like complex 4 (AP-4) and may therefore play a role in vesicular trafficking of proteins at the trans-Golgi network. The chain is AP-4 complex accessory subunit RUSC2 from Homo sapiens (Human).